Consider the following 133-residue polypeptide: Small ribosomal subunit protein uS9 (133 aa).

This sequence belongs to the universal ribosomal protein uS9 family.

In Picrophilus torridus (strain ATCC 700027 / DSM 9790 / JCM 10055 / NBRC 100828 / KAW 2/3), this protein is Small ribosomal subunit protein uS9.